The sequence spans 152 residues: Large ribosomal subunit protein bL9 (152 aa).

The protein belongs to the bacterial ribosomal protein bL9 family.

Binds to the 23S rRNA. This is Large ribosomal subunit protein bL9 from Synechococcus sp. (strain CC9902).